The primary structure comprises 141 residues: uncharacterized protein (141 aa).

It belongs to the mimivirus L163/R849 family.

This is an uncharacterized protein from Acanthamoeba polyphaga mimivirus (APMV).